We begin with the raw amino-acid sequence, 203 residues long: 3-isopropylmalate dehydratase small subunit (203 aa).

It belongs to the LeuD family. LeuD type 1 subfamily. In terms of assembly, heterodimer of LeuC and LeuD.

The catalysed reaction is (2R,3S)-3-isopropylmalate = (2S)-2-isopropylmalate. The protein operates within amino-acid biosynthesis; L-leucine biosynthesis; L-leucine from 3-methyl-2-oxobutanoate: step 2/4. Functionally, catalyzes the isomerization between 2-isopropylmalate and 3-isopropylmalate, via the formation of 2-isopropylmaleate. The protein is 3-isopropylmalate dehydratase small subunit of Pelagibacter ubique (strain HTCC1062).